Consider the following 166-residue polypeptide: NAD(P)H-quinone oxidoreductase subunit I, chloroplastic (166 aa).

4Fe-4S ferredoxin-type domains are found at residues 55-84 (GRIH…VDWK) and 95-124 (LNYS…MTEE). 8 residues coordinate [4Fe-4S] cluster: cysteine 64, cysteine 67, cysteine 70, cysteine 74, cysteine 104, cysteine 107, cysteine 110, and cysteine 114.

This sequence belongs to the complex I 23 kDa subunit family. In terms of assembly, NDH is composed of at least 16 different subunits, 5 of which are encoded in the nucleus. [4Fe-4S] cluster is required as a cofactor.

The protein localises to the plastid. The protein resides in the chloroplast thylakoid membrane. The catalysed reaction is a plastoquinone + NADH + (n+1) H(+)(in) = a plastoquinol + NAD(+) + n H(+)(out). The enzyme catalyses a plastoquinone + NADPH + (n+1) H(+)(in) = a plastoquinol + NADP(+) + n H(+)(out). Functionally, NDH shuttles electrons from NAD(P)H:plastoquinone, via FMN and iron-sulfur (Fe-S) centers, to quinones in the photosynthetic chain and possibly in a chloroplast respiratory chain. The immediate electron acceptor for the enzyme in this species is believed to be plastoquinone. Couples the redox reaction to proton translocation, and thus conserves the redox energy in a proton gradient. The sequence is that of NAD(P)H-quinone oxidoreductase subunit I, chloroplastic from Aphanactis jamesoniana.